We begin with the raw amino-acid sequence, 28 residues long: Ranatuerin-2BYb (28 aa).

A disulfide bridge connects residues Cys-23 and Cys-28.

As to expression, expressed by the skin glands.

It localises to the secreted. In terms of biological role, antibacterial activity against Gram-negative bacterium E.coli. Very weak hemolysis activity. In Rana boylii (Foothill yellow-legged frog), this protein is Ranatuerin-2BYb.